The chain runs to 344 residues: Phenylalanine--tRNA ligase alpha subunit (344 aa).

Mg(2+) is bound at residue glutamate 255.

Belongs to the class-II aminoacyl-tRNA synthetase family. Phe-tRNA synthetase alpha subunit type 1 subfamily. Tetramer of two alpha and two beta subunits. Mg(2+) serves as cofactor.

The protein resides in the cytoplasm. The enzyme catalyses tRNA(Phe) + L-phenylalanine + ATP = L-phenylalanyl-tRNA(Phe) + AMP + diphosphate + H(+). The sequence is that of Phenylalanine--tRNA ligase alpha subunit from Sulfurihydrogenibium sp. (strain YO3AOP1).